A 1582-amino-acid chain; its full sequence is ATP-binding cassette sub-family C member 8 (1582 aa).

At 1–30 (MPLAFCGTENHSAAYRVDQGVLNNGCFVDA) the chain is on the extracellular side. Residues cysteine 6 and cysteine 26 are joined by a disulfide bond. N-linked (GlcNAc...) asparagine glycosylation occurs at asparagine 10. A helical transmembrane segment spans residues 31-47 (LNVVPHVFLLFITFPIL). At 48–72 (FIGWGSQSSKVHIHHSTWLHFPGHN) the chain is on the cytoplasmic side. The helical transmembrane segment at 73–89 (LRWILTFILLFVLVCEI) threads the bilayer. Residues 90–106 (AEGILSDGVTESRHLHL) lie on the Extracellular side of the membrane. Residues 107-123 (YMPAGMAFMAAITSVVY) traverse the membrane as a helical segment. Residues 124-136 (YHNIETSNFPKLL) lie on the Cytoplasmic side of the membrane. Residues 137 to 153 (IALLIYWTLAFITKTIK) form a helical membrane-spanning segment. At 154–169 (FVKFYDHAIGFSQLRF) the chain is on the extracellular side. A helical membrane pass occupies residues 170–186 (CLTGLLVILYGMLLLVE). The Cytoplasmic segment spans residues 187 to 303 (VNVIRVRRYI…AFGRRLILSS (117 aa)). An ABC transmembrane type-1 1 domain is found at 299–602 (LILSSTFRIL…LSSVVRSTVK (304 aa)). The helical transmembrane segment at 304–319 (TFRILADLLGFAGPLC) threads the bilayer. Over 320–356 (IFGIVDHLGKENHVFQPKTQFLGVYFVSSQEFLGNAY) the chain is Extracellular. Residues 357–372 (VLAVLLFLALLLQRTF) traverse the membrane as a helical segment. At 373-438 (LQASYYVAIE…MWFFFLCPNL (66 aa)) the chain is on the cytoplasmic side. Residues 439-454 (WTMPVQIIVGVILLYY) traverse the membrane as a helical segment. The Extracellular segment spans residues 455-460 (ILGVSA). Residues 461 to 473 (LIGAAVIILLAPV) form a helical membrane-spanning segment. The Cytoplasmic segment spans residues 474–541 (QYFVATKLSQ…SLRAFAVYTS (68 aa)). The helical transmembrane segment at 542–557 (ISIFMNTAIPIAAVLI) threads the bilayer. Over 558–576 (TFVGHVSFFKESDLSPSVA) the chain is Extracellular. The chain crosses the membrane as a helical span at residues 577–592 (FASLSLFHILVTPLFL). Topologically, residues 593 to 1013 (LSSVVRSTVK…YLSSAGILLL (421 aa)) are cytoplasmic. Residues 679-930 (VQIIGGFFTW…ECQLFEHWKT (252 aa)) enclose the ABC transporter 1 domain. Tryptophan 688, glycine 716, serine 720, and serine 721 together coordinate ATP. Serine 720 is a Mg(2+) binding site. The tract at residues 741 to 766 (SNLPDSEGEDPSSPERETAAGSDIRS) is disordered. Residue glutamine 775 coordinates Mg(2+). Over residues 939-950 (LEKETVMERKAS) the composition is skewed to basic and acidic residues. Positions 939–962 (LEKETVMERKASEPSQGLPRAMSS) are disordered. Residues 1013-1307 (LSLLVFSQLL…MVRNLADMEI (295 aa)) enclose the ABC transmembrane type-1 2 domain. Residues 1014–1031 (SLLVFSQLLKHMVLVAID) traverse the membrane as a helical segment. Topologically, residues 1032–1067 (YWLAKWTDSALVLSPAARNCSLSQECDLDQSVYAMV) are extracellular. N-linked (GlcNAc...) asparagine glycosylation is present at asparagine 1050. A helical transmembrane segment spans residues 1068-1084 (FTLLCSLGIVLCLVTSV). Residues 1085-1143 (TVEWTGLKVAKRLHRSLLNRIILAPMRFFETTPLGSILNRFSSDCNTIDQHIPSTLECL) lie on the Cytoplasmic side of the membrane. Residues 1144-1161 (SRSTLLCVSALTVISYVT) traverse the membrane as a helical segment. Proline 1162 is a topological domain (extracellular). Residues 1163 to 1175 (VFLVALLPLAVVC) form a helical membrane-spanning segment. Topologically, residues 1176–1249 (YFIQKYFRVA…FLTAANRWLE (74 aa)) are cytoplasmic. Residues 1250 to 1265 (VCMEYIGACVVLIAAA) form a helical membrane-spanning segment. Residues 1266 to 1281 (TSISNSLHRELSAGLV) lie on the Extracellular side of the membrane. Residues 1282–1297 (GLGLTYALMVSNYLNW) traverse the membrane as a helical segment. Topologically, residues 1298 to 1582 (MVRNLADMEI…VFASFVRADK (285 aa)) are cytoplasmic. Residues 1345 to 1579 (IQIQNLSVRY…KDSVFASFVR (235 aa)) enclose the ABC transporter 2 domain. Residues threonine 1381, glycine 1382, glycine 1384, lysine 1385, serine 1386, and serine 1387 each contribute to the ADP site. Position 1483 (serine 1483) interacts with ATP.

This sequence belongs to the ABC transporter superfamily. ABCC family. Conjugate transporter (TC 3.A.1.208) subfamily. Forms an heterooctamer with KCNJ11; four ABCC8/SUR1 molecules interact with one KCNJ11 homotetramer.

The protein localises to the cell membrane. With respect to regulation, KATP channels are regulated by cytoplasmic ATP/ADP ratios; ATP inhibits the channel by closing the pore, while ADP activates the channel. Activated by phosphatidylinositol 4,5-biphosphate (PtdIns(4,5)P2). In terms of biological role, regulator subunit of pancreatic ATP-sensitive potassium channel (KATP), playing a major role in the regulation of insulin release. In pancreatic cells, it forms KATP channels with KCNJ11; KCNJ11 forms the channel pore while ABCC8 is required for activation and regulation. The protein is ATP-binding cassette sub-family C member 8 (ABCC8) of Cricetus cricetus (Black-bellied hamster).